Here is a 360-residue protein sequence, read N- to C-terminus: Phospho-N-acetylmuramoyl-pentapeptide-transferase (360 aa).

Helical transmembrane passes span 25 to 45 (RGIL…PWMI), 73 to 93 (TMGG…WADL), 97 to 117 (YVWV…VDDY), 134 to 154 (YFWQ…TAPT), 168 to 188 (LAIP…VGSS), 199 to 219 (GLAI…CYLS), 236 to 256 (AGEL…FLWF), 263 to 283 (VFMG…IAVI), 288 to 308 (VVLF…VIQV), and 338 to 358 (VIVR…ATLK).

The protein belongs to the glycosyltransferase 4 family. MraY subfamily. Requires Mg(2+) as cofactor.

The protein resides in the cell inner membrane. The enzyme catalyses UDP-N-acetyl-alpha-D-muramoyl-L-alanyl-gamma-D-glutamyl-meso-2,6-diaminopimeloyl-D-alanyl-D-alanine + di-trans,octa-cis-undecaprenyl phosphate = di-trans,octa-cis-undecaprenyl diphospho-N-acetyl-alpha-D-muramoyl-L-alanyl-D-glutamyl-meso-2,6-diaminopimeloyl-D-alanyl-D-alanine + UMP. It participates in cell wall biogenesis; peptidoglycan biosynthesis. Functionally, catalyzes the initial step of the lipid cycle reactions in the biosynthesis of the cell wall peptidoglycan: transfers peptidoglycan precursor phospho-MurNAc-pentapeptide from UDP-MurNAc-pentapeptide onto the lipid carrier undecaprenyl phosphate, yielding undecaprenyl-pyrophosphoryl-MurNAc-pentapeptide, known as lipid I. The polypeptide is Phospho-N-acetylmuramoyl-pentapeptide-transferase (Pseudomonas entomophila (strain L48)).